A 213-amino-acid polypeptide reads, in one-letter code: Small ribosomal subunit protein uS3 (213 aa).

The KH type-2 domain maps to 38–106 (IRKYVKEKIF…EFALEVSEIR (69 aa)).

Belongs to the universal ribosomal protein uS3 family. As to quaternary structure, part of the 30S ribosomal subunit. Forms a tight complex with proteins S10 and S14.

Binds the lower part of the 30S subunit head. Binds mRNA in the 70S ribosome, positioning it for translation. The polypeptide is Small ribosomal subunit protein uS3 (Maridesulfovibrio salexigens (strain ATCC 14822 / DSM 2638 / NCIMB 8403 / VKM B-1763) (Desulfovibrio salexigens)).